We begin with the raw amino-acid sequence, 98 residues long: Large ribosomal subunit protein uL23 (98 aa).

The protein belongs to the universal ribosomal protein uL23 family. As to quaternary structure, part of the 50S ribosomal subunit. Contacts protein L29, and trigger factor when it is bound to the ribosome.

One of the early assembly proteins it binds 23S rRNA. One of the proteins that surrounds the polypeptide exit tunnel on the outside of the ribosome. Forms the main docking site for trigger factor binding to the ribosome. This is Large ribosomal subunit protein uL23 from Legionella pneumophila (strain Paris).